The sequence spans 258 residues: 4-hydroxy-2-oxovalerate aldolase (258 aa).

Histidine 48 (proton acceptor) is an active-site residue. Glutamine 149 is a binding site for substrate. Residue glutamate 151 participates in Mg(2+) binding. Residues alanine 176 and aspartate 177 each coordinate substrate. Residue aspartate 177 coordinates Mg(2+).

The protein belongs to the HpcH/HpaI aldolase family.

The catalysed reaction is (S)-4-hydroxy-2-oxopentanoate = acetaldehyde + pyruvate. Its pathway is xenobiotic degradation; biphenyl degradation. In terms of biological role, catalyzes the reversible retro-aldol cleavage of 4-hydroxy-2-oxovalerate to pyruvate and acetaldehyde. The sequence is that of 4-hydroxy-2-oxovalerate aldolase (bphF) from Rhodococcus jostii (strain RHA1).